The sequence spans 65 residues: Large ribosomal subunit protein bL35 (65 aa).

This sequence belongs to the bacterial ribosomal protein bL35 family.

The chain is Large ribosomal subunit protein bL35 from Phytoplasma mali (strain AT).